The primary structure comprises 422 residues: MRVLVIGSGAREHALLLALGKDPQVSGLIVAPGNAGTARIAEQHDVDITSAEAVVALAREVGADMVVIGPEVPLVLGVADAVRAAGIVCFGPGKDAARIEGSKAFAKDVMAAAGVRTANSEIVDSPAHLDAALDRFGPPAGDPAWVVKDDRLAAGKGVVVTADRDVARAHGAALLEAGHPVLLESYLDGPEVSLFCVVDRTVVVPLLPAQDFKRVGEDDTGLNTGGMGAYAPLPWLPDNIYREVVSRIVEPVAAELVRRGSSFCGLLYVGLAITARGPAVVEFNCRFGDPETQAVLALLESPLGQLLHAAATGKLADFGELRWRDGVAVTVVLAAENYPGRPRVGDVVVGSEAEGVLHAGTTRRDDGAIVSSGGRVLSVVGTGADLSAARAHAYEILSSIRLPGGHFRSDIGLRAAEGKISV.

In terms of domain architecture, ATP-grasp spans 107 to 312 (KDVMAAAGVR…LGQLLHAAAT (206 aa)). ATP is bound at residue 137 to 193 (GPPAGDPAWVVKDDRLAAGKGVVVTADRDVARAHGAALLEAGHPVLLESYLDGPEVS). Mg(2+) contacts are provided by Glu-282 and Asn-284.

This sequence belongs to the GARS family. Mg(2+) serves as cofactor. Mn(2+) is required as a cofactor.

The enzyme catalyses 5-phospho-beta-D-ribosylamine + glycine + ATP = N(1)-(5-phospho-beta-D-ribosyl)glycinamide + ADP + phosphate + H(+). The protein operates within purine metabolism; IMP biosynthesis via de novo pathway; N(1)-(5-phospho-D-ribosyl)glycinamide from 5-phospho-alpha-D-ribose 1-diphosphate: step 2/2. The sequence is that of Phosphoribosylamine--glycine ligase from Mycobacterium bovis (strain ATCC BAA-935 / AF2122/97).